A 362-amino-acid polypeptide reads, in one-letter code: Peptide chain release factor 2 (362 aa).

Glutamine 250 carries the N5-methylglutamine modification.

Belongs to the prokaryotic/mitochondrial release factor family. Methylated by PrmC. Methylation increases the termination efficiency of RF2.

The protein localises to the cytoplasm. Functionally, peptide chain release factor 2 directs the termination of translation in response to the peptide chain termination codons UGA and UAA. The polypeptide is Peptide chain release factor 2 (Clostridium perfringens (strain ATCC 13124 / DSM 756 / JCM 1290 / NCIMB 6125 / NCTC 8237 / Type A)).